A 689-amino-acid polypeptide reads, in one-letter code: Glycine--tRNA ligase beta subunit (689 aa).

It belongs to the class-II aminoacyl-tRNA synthetase family. In terms of assembly, tetramer of two alpha and two beta subunits.

It is found in the cytoplasm. It carries out the reaction tRNA(Gly) + glycine + ATP = glycyl-tRNA(Gly) + AMP + diphosphate. This is Glycine--tRNA ligase beta subunit from Salmonella paratyphi A (strain ATCC 9150 / SARB42).